Reading from the N-terminus, the 554-residue chain is MNLDSLSKIIKNKIQNVLYPTSKALLSSDDPSKRAETCYDLSQKIEEFELVCDELYGIIEIHKQNVIFSNINNGTHISKENNPEVLFNSLVSRLSTLRQTKSTMDSFAKEISIVQPIDNKANTNNNNNNNNNNNNNNNNNNNNNNNTNTNTNNTNNTNNTTNTNNTNNNNNNNYNNNNNNNNNNNNNNNNNNNNNNNNSINNSINNNSNNKVGSNDNPSTAPITENNTENNAGNTNNTNNNNNNNNNNNNNNNNNNNNNNNNTNQVAESSNISSNTTPPETTNIVNDPNSVSGGNLTNTEAPMEISDNSEIQHPQQEQQQQQQQQQQQQQQQQQQQQQPQEQIPQQQQPQLPMQQEQIQQLPQQQTPPSQQQPQQTPPLPQQFQQPLVNVNQITSPTLENQSISGNNNNNNDGQTISPQQQQEQLQLQMQQLQQLQMQQQQMNFNPTEPINTNFYNIDLQQPIQQQTLNNNNNNINSLENQINTNLGGNTFNTGTTPPLQQQPQPQQQQQINNPEINQIDDDNTMKETIDVDKIIEESNNVNNNVNNRQVIDLE.

Disordered stretches follow at residues 118–301, 330–381, 398–428, and 483–524; these read DNKA…NTEA, QQQQ…PLPQ, LENQSISGNNNNNNDGQTISPQQQQEQLQLQ, and NTNL…DDNT. The span at 122–210 shows a compositional bias: low complexity; sequence NTNNNNNNNN…NNSINNNSNN (89 aa). The stretch at 167–194 forms a coiled coil; that stretch reads NNNNNNNYNNNNNNNNNNNNNNNNNNNN. The segment covering 211–225 has biased composition (polar residues); sequence KVGSNDNPSTAPITE. Residues 226-264 are compositionally biased toward low complexity; sequence NNTENNAGNTNNTNNNNNNNNNNNNNNNNNNNNNNNNTN. The span at 265-300 shows a compositional bias: polar residues; sequence QVAESSNISSNTTPPETTNIVNDPNSVSGGNLTNTE. Composition is skewed to low complexity over residues 330–374, 419–428, and 483–517; these read QQQQ…QQPQ, QQQQEQLQLQ, and NTNLGGNTFNTGTTPPLQQQPQPQQQQQINNPEIN. The stretch at 419 to 486 forms a coiled coil; the sequence is QQQQEQLQLQ…SLENQINTNL (68 aa).

The protein belongs to the Mediator complex subunit 29 family. As to quaternary structure, component of the Mediator complex.

It is found in the nucleus. Its function is as follows. Component of the Mediator complex, a coactivator involved in the regulated transcription of nearly all RNA polymerase II-dependent genes. Mediator functions as a bridge to convey information from gene-specific regulatory proteins to the basal RNA polymerase II transcription machinery. Mediator is recruited to promoters by direct interactions with regulatory proteins and serves as a scaffold for the assembly of a functional preinitiation complex with RNA polymerase II and the general transcription factors. The polypeptide is Putative mediator of RNA polymerase II transcription subunit 29 (med29) (Dictyostelium discoideum (Social amoeba)).